The primary structure comprises 156 residues: Transcription elongation factor GreA (156 aa).

A coiled-coil region spans residues 1-32; the sequence is MKKVRLTREGYEKLKQELEELKRKFMYEISER.

The protein belongs to the GreA/GreB family.

In terms of biological role, necessary for efficient RNA polymerase transcription elongation past template-encoded arresting sites. The arresting sites in DNA have the property of trapping a certain fraction of elongating RNA polymerases that pass through, resulting in locked ternary complexes. Cleavage of the nascent transcript by cleavage factors such as GreA or GreB allows the resumption of elongation from the new 3'terminus. GreA releases sequences of 2 to 3 nucleotides. The polypeptide is Transcription elongation factor GreA (Thermotoga neapolitana (strain ATCC 49049 / DSM 4359 / NBRC 107923 / NS-E)).